We begin with the raw amino-acid sequence, 481 residues long: NADH-quinone oxidoreductase subunit N (481 aa).

14 helical membrane passes run alanine 11–alanine 31, tyrosine 37–isoleucine 57, alanine 74–serine 94, leucine 103–valine 123, leucine 128–leucine 148, phenylalanine 162–glycine 182, isoleucine 205–proline 225, proline 238–methionine 258, tryptophan 272–isoleucine 292, methionine 300–glycine 320, methionine 328–valine 348, leucine 371–phenylalanine 391, glycine 405–leucine 425, and leucine 457–isoleucine 477.

The protein belongs to the complex I subunit 2 family. In terms of assembly, NDH-1 is composed of 14 different subunits. Subunits NuoA, H, J, K, L, M, N constitute the membrane sector of the complex.

The protein resides in the cell inner membrane. It carries out the reaction a quinone + NADH + 5 H(+)(in) = a quinol + NAD(+) + 4 H(+)(out). NDH-1 shuttles electrons from NADH, via FMN and iron-sulfur (Fe-S) centers, to quinones in the respiratory chain. The immediate electron acceptor for the enzyme in this species is believed to be ubiquinone. Couples the redox reaction to proton translocation (for every two electrons transferred, four hydrogen ions are translocated across the cytoplasmic membrane), and thus conserves the redox energy in a proton gradient. This chain is NADH-quinone oxidoreductase subunit N, found in Nitrosomonas europaea (strain ATCC 19718 / CIP 103999 / KCTC 2705 / NBRC 14298).